A 397-amino-acid chain; its full sequence is Elongation factor Tu (397 aa).

Residues 10-206 form the tr-type G domain; that stretch reads KPHVNIGTIG…AVDEAIPTPP (197 aa). Residues 19–26 form a G1 region; it reads GHIDHGKT. A GTP-binding site is contributed by 19–26; that stretch reads GHIDHGKT. Thr26 contributes to the Mg(2+) binding site. The tract at residues 62–66 is G2; it reads GITIS. The interval 83-86 is G3; it reads DCPG. Residues 83–87 and 138–141 contribute to the GTP site; these read DCPGH and NKAD. Positions 138-141 are G4; sequence NKAD. Positions 176 to 178 are G5; sequence SAL.

Belongs to the TRAFAC class translation factor GTPase superfamily. Classic translation factor GTPase family. EF-Tu/EF-1A subfamily. As to quaternary structure, monomer.

The protein localises to the cytoplasm. The catalysed reaction is GTP + H2O = GDP + phosphate + H(+). GTP hydrolase that promotes the GTP-dependent binding of aminoacyl-tRNA to the A-site of ribosomes during protein biosynthesis. In Kitasatospora aureofaciens (Streptomyces aureofaciens), this protein is Elongation factor Tu.